Consider the following 396-residue polypeptide: Phosphoglycerate kinase (396 aa).

Substrate-binding positions include 19–21 (DFN), R35, 58–61 (HLGR), R117, and R150. ATP contacts are provided by residues K201, E323, and 349 to 352 (GGDT).

It belongs to the phosphoglycerate kinase family. In terms of assembly, monomer.

The protein resides in the cytoplasm. It carries out the reaction (2R)-3-phosphoglycerate + ATP = (2R)-3-phospho-glyceroyl phosphate + ADP. Its pathway is carbohydrate degradation; glycolysis; pyruvate from D-glyceraldehyde 3-phosphate: step 2/5. In Desulfosudis oleivorans (strain DSM 6200 / JCM 39069 / Hxd3) (Desulfococcus oleovorans), this protein is Phosphoglycerate kinase.